The chain runs to 130 residues: Serum amyloid A-4 protein (130 aa).

The first 18 residues, 1 to 18 (MRLATVIVLCSLFLGVSG), serve as a signal peptide directing secretion. A disordered region spans residues 109-130 (EEWGRSGKNPNHFRPEGLPEKF). Residues 121–130 (FRPEGLPEKF) are compositionally biased toward basic and acidic residues.

Belongs to the SAA family. In terms of assembly, apolipoprotein of the HDL complex. In terms of tissue distribution, expressed by the liver; secreted in plasma.

The protein resides in the secreted. Major acute phase reactant. This chain is Serum amyloid A-4 protein, found in Mus musculus (Mouse).